Consider the following 150-residue polypeptide: Catabolic 3-dehydroquinase (150 aa).

The active-site Proton acceptor is the Y24. Positions 75, 81, and 88 each coordinate substrate. H101 acts as the Proton donor in catalysis. Residues V102 to S103 and R112 contribute to the substrate site.

It belongs to the type-II 3-dehydroquinase family. As to quaternary structure, homododecamer. Adopts a ring-like structure, composed of an arrangement of two hexameric rings stacked on top of one another.

It carries out the reaction 3-dehydroquinate = 3-dehydroshikimate + H2O. Its pathway is aromatic compound metabolism; 3,4-dihydroxybenzoate biosynthesis; 3,4-dihydroxybenzoate from 3-dehydroquinate: step 1/2. Is involved in the catabolism of quinate. Allows the utilization of quinate as carbon source via the beta-ketoadipate pathway. The chain is Catabolic 3-dehydroquinase from Aspergillus clavatus (strain ATCC 1007 / CBS 513.65 / DSM 816 / NCTC 3887 / NRRL 1 / QM 1276 / 107).